The chain runs to 546 residues: ATP-dependent rRNA helicase RRP3 (546 aa).

The interval 1–108 (MSDFKRRKLE…DEEAEAQAAA (108 aa)) is disordered. 2 stretches are compositionally biased toward acidic residues: residues 60 to 77 (SEEDEDEFGGFSGEEEED) and 94 to 103 (EAEQSDEEAE). Residues 115–143 (KTFADLGVREELCDACENLGYKTATPIQT) carry the Q motif motif. Residues 146–318 (IPLALAGKDI…RAALKNPVRV (173 aa)) form the Helicase ATP-binding domain. ATP is bound at residue 159 to 166 (AETGSGKT). The short motif at 265-268 (DEAD) is the DEAD box element. A Helicase C-terminal domain is found at 342-490 (YKDLYLIHLL…EEKVSRDEVM (149 aa)). A compositionally biased stretch (basic and acidic residues) spans 504–515 (VREMKDLHDQRK). The disordered stretch occupies residues 504 to 546 (VREMKDLHDQRKSGRGGRGGGRGGGRGGRGRGGRRDNMDMDEG). Positions 519-530 (GGRGGGRGGGRG) are enriched in gly residues. Residues 536-546 (GRRDNMDMDEG) show a composition bias toward basic and acidic residues.

Belongs to the DEAD box helicase family. DDX47/RRP3 subfamily. As to quaternary structure, interacts with the SSU processome.

It is found in the nucleus. The catalysed reaction is ATP + H2O = ADP + phosphate + H(+). In terms of biological role, ATP-dependent rRNA helicase required for pre-ribosomal RNA processing. Involved in the maturation of the 35S-pre-rRNA and to its cleavage to mature 18S rRNA. The protein is ATP-dependent rRNA helicase RRP3 of Phaeosphaeria nodorum (strain SN15 / ATCC MYA-4574 / FGSC 10173) (Glume blotch fungus).